We begin with the raw amino-acid sequence, 245 residues long: Adenosylcobinamide-GDP ribazoletransferase (245 aa).

The next 5 membrane-spanning stretches (helical) occupy residues 31 to 51 (FGRA…VLYG), 61 to 81 (PLLQ…ALHL), 113 to 133 (AAVV…AALL), 138 to 158 (PGLL…LFLT), and 192 to 212 (LAFG…FAWL).

This sequence belongs to the CobS family. Requires Mg(2+) as cofactor.

The protein localises to the cell inner membrane. It carries out the reaction alpha-ribazole + adenosylcob(III)inamide-GDP = adenosylcob(III)alamin + GMP + H(+). The catalysed reaction is alpha-ribazole 5'-phosphate + adenosylcob(III)inamide-GDP = adenosylcob(III)alamin 5'-phosphate + GMP + H(+). The protein operates within cofactor biosynthesis; adenosylcobalamin biosynthesis; adenosylcobalamin from cob(II)yrinate a,c-diamide: step 7/7. Joins adenosylcobinamide-GDP and alpha-ribazole to generate adenosylcobalamin (Ado-cobalamin). Also synthesizes adenosylcobalamin 5'-phosphate from adenosylcobinamide-GDP and alpha-ribazole 5'-phosphate. This is Adenosylcobinamide-GDP ribazoletransferase from Pseudomonas paraeruginosa (strain DSM 24068 / PA7) (Pseudomonas aeruginosa (strain PA7)).